Here is a 110-residue protein sequence, read N- to C-terminus: Small ribosomal subunit protein mS33 (110 aa).

Over residues K84–K95 the composition is skewed to basic residues. Residues K84–K110 are disordered.

Belongs to the mitochondrion-specific ribosomal protein mS33 family. As to quaternary structure, component of the mitochondrial small ribosomal subunit (mt-SSU). Mature yeast 74S mitochondrial ribosomes consist of a small (37S) and a large (54S) subunit. The 37S small subunit contains a 15S ribosomal RNA (15S mt-rRNA) and 34 different proteins. The 54S large subunit contains a 21S rRNA (21S mt-rRNA) and 46 different proteins.

The protein resides in the mitochondrion. Its function is as follows. Component of the mitochondrial ribosome (mitoribosome), a dedicated translation machinery responsible for the synthesis of mitochondrial genome-encoded proteins, including at least some of the essential transmembrane subunits of the mitochondrial respiratory chain. The mitoribosomes are attached to the mitochondrial inner membrane and translation products are cotranslationally integrated into the membrane. The sequence is that of Small ribosomal subunit protein mS33 (RSM27) from Saccharomyces cerevisiae (strain ATCC 204508 / S288c) (Baker's yeast).